A 398-amino-acid chain; its full sequence is Phosphoglycerate kinase (398 aa).

Substrate-binding positions include 23–25, arginine 38, 61–64, arginine 122, and arginine 155; these read DFN and HMGK. ATP is bound by residues lysine 206, glycine 297, glutamate 328, and 354–357; that span reads GGDS.

The protein belongs to the phosphoglycerate kinase family. In terms of assembly, monomer.

It is found in the cytoplasm. It catalyses the reaction (2R)-3-phosphoglycerate + ATP = (2R)-3-phospho-glyceroyl phosphate + ADP. The protein operates within carbohydrate degradation; glycolysis; pyruvate from D-glyceraldehyde 3-phosphate: step 2/5. The polypeptide is Phosphoglycerate kinase (Clostridium botulinum (strain Kyoto / Type A2)).